The chain runs to 357 residues: MKVLAALALSALALAKPTPPMPGMSLIQTGPQETRWVTDAEKLELTMNNVGFFDITDMPVTASSVTKPKSYAFPGNVSHQADVKPLLGKLSSDHLMSNLQKFSDFPNRYYQADTGVQSAEWVLSQVQGVIGKIQGAKAEKIEHKWKQPSIRAIIPGKSEKIVVVGAHQDSINGQNPKAAAPGADDNGSGSMTILEALTALVSDQKIAGGQATNTIEFHWYAGEEAGLLGSQAVFQQYKQAGKEVVAMLNQDMTGYGKTMGIITDNSDSALTTFTKMILDTYTTAKYADSECGYACSDHASANKAGYPSAFVYEAVLGQDNPAIHSPDDTIDKLDPAKMLEHAKLVVGFAYELAFANL.

Positions 1–15 are cleaved as a signal peptide; that stretch reads MKVLAALALSALALA. Asn-76 carries N-linked (GlcNAc...) asparagine glycosylation. The Zn(2+) site is built by His-167 and Asp-185. Residue Asn-186 is glycosylated (N-linked (GlcNAc...) asparagine). Zn(2+) is bound by residues Glu-224 and Asp-251. Residues Cys-291 and Cys-295 are joined by a disulfide bond. His-324 is a Zn(2+) binding site.

This sequence belongs to the peptidase M28 family. M28E subfamily. As to quaternary structure, monomer. It depends on Zn(2+) as a cofactor.

The protein localises to the secreted. Probable extracellular aminopeptidase which contributes to pathogenicity. In Arthroderma otae (strain ATCC MYA-4605 / CBS 113480) (Microsporum canis), this protein is Probable leucine aminopeptidase MCYG_04170.